Consider the following 207-residue polypeptide: Casparian strip membrane protein 1 (207 aa).

A compositionally biased stretch (polar residues) spans 1-12; it reads MEGESTAVNITE. The tract at residues 1–24 is disordered; the sequence is MEGESTAVNITETPKERKGKAPLL. Residues 1–48 lie on the Cytoplasmic side of the membrane; it reads MEGESTAVNITETPKERKGKAPLLAPPPASGGIKTIVQKAPKGGYKRG. The chain crosses the membrane as a helical span at residues 49–69; sequence LAVFDVVLRIAGIAAALGAVI. Residues 70–98 lie on the Extracellular side of the membrane; that stretch reads AMGSTDQTLPFFTQFFQFKAEFDDLPVFT. The chain crosses the membrane as a helical span at residues 99 to 119; it reads FFVIANAITAAYLALSIPISI. Residues 120–138 lie on the Cytoplasmic side of the membrane; sequence VCIIRPHLVGPRVLLTFLD. Residues 139 to 159 form a helical membrane-spanning segment; sequence TVMVGLTTAAAGGAASIVYLA. Residues 160–184 lie on the Extracellular side of the membrane; that stretch reads HNGNSDANWPAICQQFNDFCQEVSG. The helical transmembrane segment at 185 to 205 threads the bilayer; that stretch reads AVVASFITVVVLMFLIVLSAF. Topologically, residues 206 to 207 are cytoplasmic; sequence SL.

The protein belongs to the Casparian strip membrane proteins (CASP) family. In terms of assembly, homodimer and heterodimers.

It localises to the cell membrane. In terms of biological role, regulates membrane-cell wall junctions and localized cell wall deposition. Required for establishment of the Casparian strip membrane domain (CSD) and the subsequent formation of Casparian strips, a cell wall modification of the root endodermis that determines an apoplastic barrier between the intraorganismal apoplasm and the extraorganismal apoplasm and prevents lateral diffusion. In Taraxacum kok-saghyz (Russian dandelion), this protein is Casparian strip membrane protein 1.